The sequence spans 255 residues: 4-hydroxy-tetrahydrodipicolinate reductase (255 aa).

NAD(+)-binding positions include Gly-9–Met-14, Asp-35, Gly-89–Thr-91, and Ala-115–Phe-118. His-145 functions as the Proton donor/acceptor in the catalytic mechanism. (S)-2,3,4,5-tetrahydrodipicolinate is bound at residue His-146. The active-site Proton donor is the Lys-149. Gly-155–Thr-156 contributes to the (S)-2,3,4,5-tetrahydrodipicolinate binding site.

The protein belongs to the DapB family.

It localises to the cytoplasm. It catalyses the reaction (S)-2,3,4,5-tetrahydrodipicolinate + NAD(+) + H2O = (2S,4S)-4-hydroxy-2,3,4,5-tetrahydrodipicolinate + NADH + H(+). The enzyme catalyses (S)-2,3,4,5-tetrahydrodipicolinate + NADP(+) + H2O = (2S,4S)-4-hydroxy-2,3,4,5-tetrahydrodipicolinate + NADPH + H(+). It functions in the pathway amino-acid biosynthesis; L-lysine biosynthesis via DAP pathway; (S)-tetrahydrodipicolinate from L-aspartate: step 4/4. Functionally, catalyzes the conversion of 4-hydroxy-tetrahydrodipicolinate (HTPA) to tetrahydrodipicolinate. The chain is 4-hydroxy-tetrahydrodipicolinate reductase from Streptococcus pneumoniae serotype 19F (strain G54).